Reading from the N-terminus, the 296-residue chain is 5,10-methylenetetrahydrofolate reductase (296 aa).

The active-site Proton donor/acceptor is Glu28. Residue Thr59 participates in NADH binding. Residues Tyr60, Ala62, His88, Arg118, Gly119, Asp120, Ala132, Tyr152, His156, Ala159, Asp165, Asn168, Arg171, and Lys172 each contribute to the FAD site. Asp120 is a (6S)-5-methyl-5,6,7,8-tetrahydrofolate binding site. Gln183 serves as a coordination point for NADH. (6S)-5-methyl-5,6,7,8-tetrahydrofolate is bound by residues Gln183, Gln219, and Arg279.

This sequence belongs to the methylenetetrahydrofolate reductase family. The cofactor is FAD.

It catalyses the reaction (6S)-5-methyl-5,6,7,8-tetrahydrofolate + NAD(+) = (6R)-5,10-methylene-5,6,7,8-tetrahydrofolate + NADH + H(+). The protein operates within one-carbon metabolism; tetrahydrofolate interconversion. Its pathway is amino-acid biosynthesis; L-methionine biosynthesis via de novo pathway. In terms of biological role, catalyzes the NADH-dependent reduction of 5,10-methylenetetrahydrofolate to 5-methyltetrahydrofolate. Is required to provide the methyl group necessary for methionine synthetase to convert homocysteine to methionine; the methyl group is given by 5-methyltetrahydrofolate. The sequence is that of 5,10-methylenetetrahydrofolate reductase (metF) from Salmonella typhimurium (strain LT2 / SGSC1412 / ATCC 700720).